A 486-amino-acid polypeptide reads, in one-letter code: Transcription factor VOZ1 (486 aa).

Residues 208–405 are VOZ; sequence PPSAFLGPKC…VDGKKTSKGK (198 aa). Residues Cys217, Cys222, Cys236, and His240 each contribute to the Zn(2+) site. The C3H1-type; atypical zinc finger occupies 217–240; the sequence is CALWDCPRPAQGFDWFQDYCSSFH. The interval 424-445 is disordered; it reads EFPPENNTTNTTNNNKRCIKGR. Low complexity predominate over residues 429 to 438; sequence NNTTNTTNNN.

Homodimer. Interacts with phytochrome B (phyB). In terms of tissue distribution, ubiquitous. Expressed in the vascular bundles of various tissues, specifically in the phloem.

It localises to the cytoplasm. Its subcellular location is the nucleus. Transcriptional activator acting positively in the phytochrome B signaling pathway. Functions redundantly with VOZ2 to promote flowering downstream of phytochrome B (phyB). Down-regulates 'FLOWERING LOCUS C' (FLC) and up-regulates 'FLOWERING LOCUS T' (FT). Binds to the 38-bp cis-acting region of the AVP1 gene. Interacts with phyB in the cytoplasm and is translocated to the nucleus at signal transmission, where it is subjected to degradation in a phytochrome-dependent manner. In Arabidopsis thaliana (Mouse-ear cress), this protein is Transcription factor VOZ1 (VOZ1).